Consider the following 192-residue polypeptide: Peptidyl-tRNA hydrolase (192 aa).

A tRNA-binding site is contributed by Tyr-17. Catalysis depends on His-22, which acts as the Proton acceptor. The tRNA site is built by Phe-68, Asn-70, and Asn-116.

The protein belongs to the PTH family. As to quaternary structure, monomer.

It localises to the cytoplasm. The catalysed reaction is an N-acyl-L-alpha-aminoacyl-tRNA + H2O = an N-acyl-L-amino acid + a tRNA + H(+). Its function is as follows. Hydrolyzes ribosome-free peptidyl-tRNAs (with 1 or more amino acids incorporated), which drop off the ribosome during protein synthesis, or as a result of ribosome stalling. In terms of biological role, catalyzes the release of premature peptidyl moieties from peptidyl-tRNA molecules trapped in stalled 50S ribosomal subunits, and thus maintains levels of free tRNAs and 50S ribosomes. This is Peptidyl-tRNA hydrolase from Xylella fastidiosa (strain Temecula1 / ATCC 700964).